The sequence spans 323 residues: Olfactory receptor 51S1 (323 aa).

The Extracellular segment spans residues 1–33; sequence MSTLPTQIAPNSSTSMAPTFLLVGMPGLSGAPS. N-linked (GlcNAc...) asparagine glycosylation is present at Asn11. Residues 34–54 traverse the membrane as a helical segment; that stretch reads WWTLPLIAVYLLSALGNGTIL. Residues 55 to 62 are Cytoplasmic-facing; that stretch reads WIIALQPA. Residues 63–83 form a helical membrane-spanning segment; it reads LHRPMHFFLFLLSVSDIGLVT. Over 84–107 the chain is Extracellular; the sequence is ALMPTLLGIALAGAHTVPASACLL. A disulfide bridge connects residues Cys105 and Cys197. The chain crosses the membrane as a helical span at residues 108 to 128; the sequence is QMVFIHVFSVMESSVLLAMSI. Residues 129 to 147 lie on the Cytoplasmic side of the membrane; it reads DRALAICRPLHYPALLTNG. Residues 148-168 traverse the membrane as a helical segment; sequence VISKISLAISFRCLGLHLPLP. The Extracellular portion of the chain corresponds to 169 to 203; it reads FLLAYMPYCLPQVLTHSYCLHPDVARLACPEAWGA. A helical transmembrane segment spans residues 204-224; the sequence is AYSLFVVLSAMGLDPLLIFFS. Residues 225–244 are Cytoplasmic-facing; it reads YGLIGKVLQGVESREDRWKA. The helical transmembrane segment at 245-265 threads the bilayer; it reads GQTCAAHLSAVLLFYIPMILL. Residues 266 to 280 lie on the Extracellular side of the membrane; that stretch reads ALINHPELPITQHTH. The chain crosses the membrane as a helical span at residues 281-301; the sequence is TLLSYVHFLLPPLINPILYSV. Topologically, residues 302 to 323 are cytoplasmic; it reads KMKEIRKRILNRLQPRKVGGAQ.

The protein belongs to the G-protein coupled receptor 1 family.

Its subcellular location is the cell membrane. Functionally, odorant receptor. The chain is Olfactory receptor 51S1 (OR51S1) from Homo sapiens (Human).